The chain runs to 771 residues: MFVIKRNGYKENVMFDKITSRIRKLCYGLNTDHIDPIKIAMKVIQGIYNGVTTVELDTLAAEIAATCTTQHPDYAILAARIAISNLHKETKKLFSEVMEDLFNYVNPKNGKHSPIISSITMDIVNKYKDKLNSVIIYERDFSYNYFGFKTLEKSYLLKINNKIVERPQHMLMRVAVGIHQWDIDSAIETYNLLSEKWFTHASPTLFNAGTTRHQMSSCFLLNMIDDSIEGIYDTLKRCALISKMAGGIGLSISNIRASGSYISGTNGISNGIIPMLRVYNNTARYIDQGGNKRPGVMAIYLEPWHSDIMAFLDLKKNTGNDEHRTRDLFIALWIPDLFMKRVKDDGEWSLMCPDECPGLDNVWGDEFERLYTLYERERRYKCIIKARVVWKAIIESQIETGTPFILYKDACNKKSNQQNLGTIKCSNLCTEIIQYADANEVAVCNLASVALNMFVIDGRFDFLKLKDVVKVIVRNLNKIIDINYYPIPEAEISNKRHRPIGIGVQGLADAFILLNYPFDSLEAQDLNKKIFETIYYGALEASCKLAEKEGPYDTYVGSYASNGILQYDLWNVVPSDLWNWEPLKDKIRTYGLRNSLLVAPMPTASTAQILGNNESVEPYTSNIYTRRVLSGEFQVVNPHLLRVLTERKLWNDEIKNRIMVDGGSIQNTNLPEDIKRVYKTIWEIPQKTIIKMAADRGAFIDQSQSMNIHIADPSYSKLTSMHFYGWSLGLKTGMYYLRTKPASAPIQFTLDKDKIKPQVVCDSEICTSCSG.

The region spanning 1-92 (MFVIKRNGYK…ISNLHKETKK (92 aa)) is the ATP-cone domain. ATP is bound by residues 5 to 6 (KR), 11 to 17 (ENVMFDK), T53, D57, and K88. Residues S202 and S217 each coordinate GDP. DTTP is bound by residues 226–228 (DSI), K243, and R256. N427 serves as a coordination point for GDP. The active-site Proton acceptor is N427. The active-site Cysteine radical intermediate is C429. Residues E431 and 603-606 (TAST) contribute to the GDP site. The active-site Proton acceptor is the E431.

This sequence belongs to the ribonucleoside diphosphate reductase large chain family. In terms of assembly, interacts with RNR2/OPG047 subunit. Mg(2+) serves as cofactor.

The enzyme catalyses a 2'-deoxyribonucleoside 5'-diphosphate + [thioredoxin]-disulfide + H2O = a ribonucleoside 5'-diphosphate + [thioredoxin]-dithiol. Functionally, ribonucleoside-diphosphate reductase holoenzyme provides the precursors necessary for viral DNA synthesis. Allows virus growth in non-dividing cells. Catalyzes the biosynthesis of deoxyribonucleotides from the corresponding ribonucleotides. The protein is Ribonucleoside-diphosphate reductase large subunit (OPG080) of Monkeypox virus.